We begin with the raw amino-acid sequence, 1119 residues long: Protein translocase subunit SecA (1119 aa).

ATP is bound by residues glutamine 177, 195 to 199, and aspartate 692; that span reads GEGKT. The interval 1025–1081 is disordered; that stretch reads APSIHEARQTKSKEKVETRKEEIPNMDERAAQSRAAGNTQRQQPEVTETIVRDRPKI. Over residues 1029 to 1055 the composition is skewed to basic and acidic residues; sequence HEARQTKSKEKVETRKEEIPNMDERAA. Polar residues predominate over residues 1059–1070; it reads AAGNTQRQQPEV.

Belongs to the SecA family. Monomer and homodimer. Part of the essential Sec protein translocation apparatus which comprises SecA, SecYEG and auxiliary proteins SecDF. Other proteins may also be involved.

It localises to the cell inner membrane. Its subcellular location is the cytoplasm. It carries out the reaction ATP + H2O + cellular proteinSide 1 = ADP + phosphate + cellular proteinSide 2.. In terms of biological role, part of the Sec protein translocase complex. Interacts with the SecYEG preprotein conducting channel. Has a central role in coupling the hydrolysis of ATP to the transfer of proteins into and across the cell membrane, serving as an ATP-driven molecular motor driving the stepwise translocation of polypeptide chains across the membrane. This chain is Protein translocase subunit SecA, found in Christiangramia forsetii (strain DSM 17595 / CGMCC 1.15422 / KT0803) (Gramella forsetii).